Here is a 504-residue protein sequence, read N- to C-terminus: ATP synthase subunit alpha (504 aa).

170–177 (GDRQTGKT) contacts ATP.

Belongs to the ATPase alpha/beta chains family. F-type ATPases have 2 components, CF(1) - the catalytic core - and CF(0) - the membrane proton channel. CF(1) has five subunits: alpha(3), beta(3), gamma(1), delta(1), epsilon(1). CF(0) has three main subunits: a(1), b(2) and c(9-12). The alpha and beta chains form an alternating ring which encloses part of the gamma chain. CF(1) is attached to CF(0) by a central stalk formed by the gamma and epsilon chains, while a peripheral stalk is formed by the delta and b chains.

The protein resides in the cell membrane. The enzyme catalyses ATP + H2O + 4 H(+)(in) = ADP + phosphate + 5 H(+)(out). In terms of biological role, produces ATP from ADP in the presence of a proton gradient across the membrane. The alpha chain is a regulatory subunit. The sequence is that of ATP synthase subunit alpha from Shouchella clausii (strain KSM-K16) (Alkalihalobacillus clausii).